The chain runs to 701 residues: Glycine--tRNA ligase beta subunit (701 aa).

This sequence belongs to the class-II aminoacyl-tRNA synthetase family. Tetramer of two alpha and two beta subunits.

The protein resides in the cytoplasm. It carries out the reaction tRNA(Gly) + glycine + ATP = glycyl-tRNA(Gly) + AMP + diphosphate. The protein is Glycine--tRNA ligase beta subunit of Anaeromyxobacter dehalogenans (strain 2CP-1 / ATCC BAA-258).